The chain runs to 276 residues: Phosphatidylglycerol--prolipoprotein diacylglyceryl transferase (276 aa).

A run of 7 helical transmembrane segments spans residues 17–37 (LAIR…LWFG), 59–79 (MLFF…VLFY), 95–115 (WEGG…MWLF), 129–149 (FIAP…FING), 176–196 (SQLY…WLFA), 202–222 (MGAV…AAEF), and 237–257 (LSMG…MVVW). Arg-142 provides a ligand contact to a 1,2-diacyl-sn-glycero-3-phospho-(1'-sn-glycerol).

Belongs to the Lgt family.

It is found in the cell inner membrane. The enzyme catalyses L-cysteinyl-[prolipoprotein] + a 1,2-diacyl-sn-glycero-3-phospho-(1'-sn-glycerol) = an S-1,2-diacyl-sn-glyceryl-L-cysteinyl-[prolipoprotein] + sn-glycerol 1-phosphate + H(+). Its pathway is protein modification; lipoprotein biosynthesis (diacylglyceryl transfer). Its function is as follows. Catalyzes the transfer of the diacylglyceryl group from phosphatidylglycerol to the sulfhydryl group of the N-terminal cysteine of a prolipoprotein, the first step in the formation of mature lipoproteins. The sequence is that of Phosphatidylglycerol--prolipoprotein diacylglyceryl transferase from Cupriavidus pinatubonensis (strain JMP 134 / LMG 1197) (Cupriavidus necator (strain JMP 134)).